The primary structure comprises 135 residues: MKRLLPSLRAKKRYLAFELISEVPVSRSDLVKEVMFSASSLLGDVTASECDIKVLGFEESKGIIQCAHTKVKETRASMATLTRINGKRATVHILGTSGTIKRATEKFLQNTAFEPEIRINPKRLKNNNLSRVQES.

The protein belongs to the eukaryotic/archaeal RNase P protein component 2 family. Consists of a catalytic RNA component and at least 4-5 protein subunits.

Its subcellular location is the cytoplasm. The catalysed reaction is Endonucleolytic cleavage of RNA, removing 5'-extranucleotides from tRNA precursor.. Functionally, part of ribonuclease P, a protein complex that generates mature tRNA molecules by cleaving their 5'-ends. The sequence is that of Ribonuclease P protein component 2 from Methanosarcina barkeri (strain Fusaro / DSM 804).